Here is a 319-residue protein sequence, read N- to C-terminus: 4-diphosphocytidyl-2-C-methyl-D-erythritol kinase (319 aa).

Lys18 is an active-site residue. Position 103–113 (103–113) interacts with ATP; it reads PIGAGLAGGST. The active site involves Asp145.

This sequence belongs to the GHMP kinase family. IspE subfamily.

The enzyme catalyses 4-CDP-2-C-methyl-D-erythritol + ATP = 4-CDP-2-C-methyl-D-erythritol 2-phosphate + ADP + H(+). It functions in the pathway isoprenoid biosynthesis; isopentenyl diphosphate biosynthesis via DXP pathway; isopentenyl diphosphate from 1-deoxy-D-xylulose 5-phosphate: step 3/6. Its function is as follows. Catalyzes the phosphorylation of the position 2 hydroxy group of 4-diphosphocytidyl-2C-methyl-D-erythritol. This chain is 4-diphosphocytidyl-2-C-methyl-D-erythritol kinase, found in Prochlorococcus marinus (strain NATL1A).